The sequence spans 1340 residues: WASH complex subunit 2 (1340 aa).

The segment at 1 to 219 is sufficient for interaction with WASHC3, WASHC4 and WASHC5; required for interaction with WASHC1; it reads MNRTTPDQEL…VGSDRGSIVD (219 aa). Phosphoserine occurs at positions 157, 159, 204, 205, and 209. Low complexity predominate over residues 201-213; sequence GELSSEEGSVGSD. Residues 201-404 form a disordered region; that stretch reads GELSSEEGSV…SSSKPGKKIP (204 aa). Residues 219–231 show a composition bias toward acidic residues; that stretch reads DTEEEKEEEESDE. The span at 232-241 shows a compositional bias: basic and acidic residues; sequence DFAHHSDNDQ. 2 stretches are compositionally biased toward acidic residues: residues 249–258 and 265–275; these read SDEEEDDDGC and EKEEEDIEDIE. Position 287 is a phosphoserine (Ser-287). Over residues 292–306 the composition is skewed to basic and acidic residues; it reads LAARIKGDAVGRVDE. The residue at position 330 (Thr-330) is a Phosphothreonine. Residues 354 to 365 are compositionally biased toward gly residues; it reads GSGGGLFSGGKG. The tract at residues 355–599 is sufficient for interaction with CCDC93; it reads SGGGLFSGGK…QTLSLQAQGE (245 aa). The segment at 356 to 1340 is interaction with VPS35; sequence GGGLFSGGKG…DDPLNAFGGQ (985 aa). The LFa 1 motif lies at 366 to 377; it reads LFDDEDEESDLF. Ser-394 and Ser-396 each carry phosphoserine. 3 consecutive short sequence motifs (LFa) follow at residues 410 to 418, 449 to 462, and 481 to 490; these read VFLGDTDVF, LFDD…DDFF, and IFGDDEGDLF. Disordered stretches follow at residues 421 to 586, 618 to 663, and 695 to 838; these read ASVP…GGTA, SSDE…KASL, and DSGG…STGV. Over residues 450–461 the composition is skewed to acidic residues; it reads FDDDDGDDDDDF. Residues 506-516 are compositionally biased toward basic and acidic residues; sequence DENKARAEKKV. Low complexity predominate over residues 517 to 527; it reads SLPSSKNLKPS. 3 consecutive short sequence motifs (LFa) follow at residues 536–547, 571–582, and 616–628; these read LFSDEEDSEDLF, LFEDEDEEDNLF, and LFSS…WNIP. 2 positions are modified to phosphoserine: Ser-538 and Ser-543. Low complexity predominate over residues 546–566; sequence LFSSQSASKLKGAPLLPGKLP. Phosphoserine is present on residues Ser-618 and Ser-619. Residues 636–646 show a composition bias toward basic and acidic residues; that stretch reads SDSRSKGESRD. Short sequence motifs (LFa) lie at residues 663–673, 689–701, and 725–737; these read LFEEDEEDDLF, LFED…GSLF, and LFSD…AQLG. Phosphoserine is present on residues Ser-727, Ser-751, Ser-786, and Ser-801. Residues 740–767 are compositionally biased toward basic and acidic residues; the sequence is PVDKKVESAKESLKFGRTDVAESEKEGL. An LFa 11 motif is present at residues 802–816; sequence LFDEEEDKMEDQNTI. The segment covering 822–833 has biased composition (basic and acidic residues); the sequence is EVGKGRDPDARP. 2 short sequence motifs (LFa) span residues 838 to 846 and 855 to 861; these read VFQDEELLF and DPDVDLF. A phosphoserine mark is found at Ser-873 and Ser-876. Residues 877 to 887 carry the LFa 14 motif; it reads LFGDDEDDDLF. 2 disordered regions span residues 906–950 and 987–1205; these read DYSV…KEPS and FPSS…EDED. Positions 916 to 930 are enriched in basic and acidic residues; it reads KHPETIQGIKEKGIW. An interaction with phospholipids region spans residues 936-1340; that stretch reads QDSSGLAPFK…DDPLNAFGGQ (405 aa). The segment covering 1027 to 1045 has biased composition (basic residues); it reads NKSRVKMRGKRRPQTRAAR. The tract at residues 1028–1046 is required for interaction with F-actin-capping protein subunit alpha (CAPZA1 or CAPZA2 or CAPZA3); the sequence is KSRVKMRGKRRPQTRAARR. Phosphoserine occurs at positions 1053 and 1086. Positions 1093–1109 are enriched in low complexity; it reads EALAAAAAPWEGGPVPG. Residue Ser-1113 is modified to Phosphoserine. 6 consecutive short sequence motifs (LFa) follow at residues 1128–1135, 1170–1184, 1200–1208, 1233–1239, 1261–1269, and 1289–1298; these read LFDSGDIF, MFPA…DDLF, LLEDEDDLF, IFEDDIF, LFDDNIDIF, and IFDDDMDDIF. A phosphoserine mark is found at Ser-1178 and Ser-1179. Positions 1301–1325 are disordered; sequence GIQAKTAKPKSRSAQAAPEPRFEHK. Positions 1329-1337 match the LFa 21 motif; that stretch reads IFDDPLNAF.

This sequence belongs to the FAM21 family. Component of the WASH core complex also described as WASH regulatory complex (SHRC) composed of WASHC1, WASHC2, WASHC3, WASHC4 and WASHC5; in the complex interacts (via N-terminus) directly with WASHC1. The WASH core complex associates with the F-actin-capping protein dimer (formed by CAPZA1, CAPZA2 or CAPZA3 and CAPZB) in a transient or substoichiometric manner which was initially described as WASH complex. Interacts with VPS35; mediates the association with the retromer CSC complex. Interacts with FKBP15. Interacts with CCDC93, CCDC22, VPS35L; indicative for an association of the WASH core complex with the CCC and retriever complexes. Directly interacts with TBC1D23.

The protein localises to the early endosome membrane. It is found in the cell membrane. In terms of biological role, acts as a component of the WASH core complex that functions as a nucleation-promoting factor (NPF) at the surface of endosomes, where it recruits and activates the Arp2/3 complex to induce actin polymerization, playing a key role in the fission of tubules that serve as transport intermediates during endosome sorting. Mediates the recruitment of the WASH core complex to endosome membranes via binding to phospholipids and VPS35 of the retromer CSC. Mediates the recruitment of the F-actin-capping protein dimer to the WASH core complex probably promoting localized F-actin polymerization needed for vesicle scission. Via its C-terminus binds various phospholipids, most strongly phosphatidylinositol 4-phosphate (PtdIns-(4)P), phosphatidylinositol 5-phosphate (PtdIns-(5)P) and phosphatidylinositol 3,5-bisphosphate (PtdIns-(3,5)P2). Involved in the endosome-to-plasma membrane trafficking and recycling of SNX27-retromer-dependent cargo proteins, such as GLUT1. Required for the association of DNAJC13, ENTR1, ANKRD50 with retromer CSC subunit VPS35. Required for the endosomal recruitment of CCC and retriever complexes subunits COMMD1 and CCDC93 as well as the retrievere complex subunit VPS35L. In Pongo abelii (Sumatran orangutan), this protein is WASH complex subunit 2.